The chain runs to 355 residues: Probable GTP 3',8-cyclase (355 aa).

Residues 5–233 (AYGRPLKDLR…GRLHNRRVYR (229 aa)) enclose the Radical SAM core domain. Arginine 14 lines the GTP pocket. [4Fe-4S] cluster is bound by residues cysteine 21, cysteine 25, and cysteine 28. A GTP-binding site is contributed by lysine 69. S-adenosyl-L-methionine is bound at residue glycine 73. Threonine 97 serves as a coordination point for GTP. S-adenosyl-L-methionine is bound at residue serine 121. Lysine 157 is a GTP binding site. Residues cysteine 252 and cysteine 255 each contribute to the [4Fe-4S] cluster site. Residue 257-259 (RVR) participates in GTP binding. Cysteine 269 serves as a coordination point for [4Fe-4S] cluster.

Belongs to the radical SAM superfamily. MoaA family. [4Fe-4S] cluster serves as cofactor.

The enzyme catalyses GTP + AH2 + S-adenosyl-L-methionine = (8S)-3',8-cyclo-7,8-dihydroguanosine 5'-triphosphate + 5'-deoxyadenosine + L-methionine + A + H(+). It participates in cofactor biosynthesis; molybdopterin biosynthesis. Functionally, catalyzes the cyclization of GTP to (8S)-3',8-cyclo-7,8-dihydroguanosine 5'-triphosphate. This is Probable GTP 3',8-cyclase from Aeropyrum pernix (strain ATCC 700893 / DSM 11879 / JCM 9820 / NBRC 100138 / K1).